Here is a 315-residue protein sequence, read N- to C-terminus: L-lactate dehydrogenase (315 aa).

Residues Val14, Asp35, and Tyr66 each contribute to the NAD(+) site. Substrate contacts are provided by residues Gln83, Arg89, and 121–124 (NPVD). NAD(+)-binding positions include 119 to 121 (VAN) and Ser144. 149–152 (DTAR) provides a ligand contact to substrate. The active-site Proton acceptor is His176. The residue at position 221 (Tyr221) is a Phosphotyrosine. Thr230 provides a ligand contact to substrate.

Belongs to the LDH/MDH superfamily. LDH family. In terms of assembly, homotetramer.

It localises to the cytoplasm. It catalyses the reaction (S)-lactate + NAD(+) = pyruvate + NADH + H(+). It functions in the pathway fermentation; pyruvate fermentation to lactate; (S)-lactate from pyruvate: step 1/1. Functionally, catalyzes the conversion of lactate to pyruvate. This Mesomycoplasma hyopneumoniae (strain 232) (Mycoplasma hyopneumoniae) protein is L-lactate dehydrogenase.